Reading from the N-terminus, the 406-residue chain is MPPALYLSGPCEICEQPAHGNHFGVLSCRACAAFFRRAALQNAKYQDRVCRKGNCIGNDLYRCKICRLKKCCEVGMNSSKFQNDRDLISSSLRPTNYTKTSAPQSLANFLGRPEFILCCEPDKASSTKRLVDVTSLVDKAWAIFQEDAAYSWSPNHYPNSLEKLTFEMEEIKLKESSKKLEIATTIGRNEALLFLEQSFLGAAQWFARLPEFSMLDPQIKIDILKTSWMIWARLDKLAATADFHRQKLLGNDVYMWTDNTCMNPGNVKIDIKWSSNYSVEQLRGFLVPDIEKYWRHALSDLVELDPTNVELNFMLIQLCLNSAGQKYQGHVLEATEKILQIQSDNMHEYYTKKLKLVNYSGRLARLMKINRAIEADVRDRKEKNHIAKVFDLFFVEYSHPEMFEFS.

Positions 8–83 (SGPCEICEQP…VGMNSSKFQN (76 aa)) form a DNA-binding region, nuclear receptor. The segment at 11 to 31 (CEICEQPAHGNHFGVLSCRAC) adopts an NR C4-type zinc-finger fold. Residues 47–66 (DRVCRKGNCIGNDLYRCKIC) form an NR C4-type; degenerate zinc finger. In terms of domain architecture, NR LBD spans 150–406 (YSWSPNHYPN…YSHPEMFEFS (257 aa)).

The protein belongs to the nuclear hormone receptor family.

It is found in the nucleus. Orphan nuclear receptor. The polypeptide is Nuclear hormone receptor family member nhr-133 (Caenorhabditis elegans).